The primary structure comprises 2094 residues: MTLHATRAATLLSWVNSLHVADPVETVLQLQDCSIFIKIINTIHDTKEGQQILQQPLPERLDFVCSFLQKNRKHPSSTQCLVSVQKVIEGSEMELAKMIMLFLYQSTMSSRNLRDWEQFEYGVQAELAVILKFMLDHEESLNLTEDLESFLEKVPYTHASTLSEELSPPSHQTKRKIRFLEIQRIASSSSENNFLSGSPSSPMGDILQTPQFQMRRLKKQLADERSNRDDLELELSESLKLLTEKDAQIAMMQQRIDHLALLNEKQAASSQEPSELEELRGKNESLTVRLHETLKQCQNLKTEKSQMDRKISQLSEENGDLSFKVREFANHLQQLQGAFNDLIEEHSKASQEWAEKQARLENELSTALQDKKCLEEKNEILQGKLSQLEDQATRLQESPAPEKGEVLGDALQLDTLKQEAAKLATDNTQLQTRVETLECERGKQEAQLLAERSRFEDEKQQLASLIADLQSSVSNLSQAKEELEQASQAQGAQLTAQLTSMTGLNATLQQRDQELASLKEQAKKEQAQMLQTMQEQEQAAQGLRQQVEQLSSSLKLKEQQLEEAAKEQEATRQDHAQQLAIVAEAREASLRERDTARQQLETVEKEKDAKLESLQQQLQAANDARDNAQTSVTQAQQEKAELSQKIGELHACIEASHQEQRQVQARVTELEAQLKAEQQKTTEREKVVQEKAQLQEQLRALEESLKITKGSLEEEKRRAADALKEQQCRATEMEAESRSLMEQREREQKELEQEKAGRKGLEARIQQLEEAHQAETEALRHELAEATASQHRAESECERLIREVESRQKRFEARQQEEARYGAMFQEQLMALKGEKTGQEVQEEAVEIHSEGQPGQQQSQLAQLHASLAKAIQQVQEKEVRAQKLVDDLSALQEKMAATNKEVACLKTLVLKAGEQQETASLELLKEPPRAANRASDQLGEQQGRPFSSTHAAVKAMEREAEQMGGELERLRAALIKSQGQQQEERGQQEREVARLTQERGQAQADLAQEKAAKAELEMRLQNTLNEQRVEFAALQEALAHALTEKEGTDQELAKLRGQEAAQRTELKELQQTLEQLKIQLVKKEKEHPAGGASGEDASGPGTQSETAGKTDAPGPELQALRAEISKLEQQCQQQQQQVEGLTHSLKSERACRAEQDKALETLQGQLEEKARELGHNQAASASAQRELQALRAKAQDHSKAEEEWKAQVARGQQEAERKSSLISSLEEEVSILNRQVLEKEGESKELKRLVVAESEKSQKLEERLRLLQVETASNSARAAERSSALREEVQSLREEVEKQRVVSENSRQELASQAERAEELGQELKAWQEKFFQKEQALSALQLEHTSTQALVSELLPAKHLCQQLQAEQAAAEKRFREELEQSKQAAGGLQAELMRAQRELGELGSLRQKIVEQERAAQQLRAEKASYAEQLSMLKKAHGLLAEENRGLGERANLGRQFLEVELDQAREKYVQELAAVRTDAETHLAEMRQEAQSTSRELEVMTAKYEGAKVKVLEERQRFQEERQKLTAQVEELSKKLTEHDQASKVQQQKLKAFQAQRGESQQEVQRLQTQLNELQAQLSQKEQAAEHYKLQMEKAKTHYDAKKQQNQKLQEQLQDLEELQKENKELRSEAERLGRELQQAGLKTKEAEQTCRHLTAQVRSLEAQVAHADQQLRDLGKFQVATDALKSREPQVKPQLDLSIDSLDLSLEEGTPCSVASKLPRTQPDGTSVPGEPASPISQRLPPKVESLESLYFTPTPARGQAPLETSLDSLGDAFPDSGRKTRSARRRTTQIINITMTKKLELEEPDSANSSFYSTQSAPASQANLRATSSTQSLARLGSPDDGNSALLSLPGYRPTTRSSARRSQARMSSGAPQGRNSFYMGTCQDEPEQLDDWNRIAELQQRNRVCPPHLKTCYPLESRPTLSLATITDEEMKTGDPRETLRRASMQPAQIAEGVGITTRQQRKRVSSETHQGPGTPESKKATSCFPRPMTPRDRHEGRKQSSTADTQKKAAPVLKQADRRQSMAFSILNTPKKLGNSLLRRGASKKTPAKVSPNPRSGTRRSPRIATTTTGTATVATTPRAKGKVKH.

The interval 1 to 210 (MTLHATRAAT…SPMGDILQTP (210 aa)) is head (Globular). Ser-160 is modified (phosphoserine). Position 161 is a phosphothreonine (Thr-161). Ser-167 and Ser-201 each carry phosphoserine. Thr-209 is subject to Phosphothreonine. Residues 211 to 1681 (QFQMRRLKKQ…ADQQLRDLGK (1471 aa)) adopt a coiled-coil conformation. Ser-269 carries the phosphoserine modification. At Lys-377 the chain carries N6-acetyllysine. Phosphoserine is present on residues Ser-386 and Ser-398. Lys-443 is modified (N6-acetyllysine). 2 disordered regions span residues 617–636 (QLQA…TQAQ) and 723–759 (LKEQ…AGRK). Residues 627 to 636 (NAQTSVTQAQ) are compositionally biased toward polar residues. Position 878 is an N6-acetyllysine (Lys-878). 3 disordered regions span residues 921–1000 (SLEL…TQER), 1081–1143 (LVKK…EGLT), and 1173–1223 (ELGH…SSLI). The segment covering 935 to 951 (ASDQLGEQQGRPFSSTH) has biased composition (polar residues). 2 stretches are compositionally biased toward basic and acidic residues: residues 956–972 (AMER…ERLR) and 983–998 (QEER…RLTQ). Ser-1183 carries the phosphoserine modification. Residues 1194–1206 (KAQDHSKAEEEWK) are compositionally biased toward basic and acidic residues. At Ser-1221 the chain carries Phosphoserine. The residue at position 1507 (Lys-1507) is an N6-acetyllysine. Ser-1583 carries the phosphoserine modification. Residue Lys-1681 forms a Glycyl lysine isopeptide (Lys-Gly) (interchain with G-Cter in SUMO2) linkage. The tract at residues 1681-1858 (KFQVATDALK…NSALLSLPGY (178 aa)) is membrane-binding domain 1. A tail (Globular) region spans residues 1682 to 2094 (FQVATDALKS…TPRAKGKVKH (413 aa)). 3 positions are modified to phosphoserine: Ser-1703, Ser-1706, and Ser-1710. Residues 1718 to 1743 (SVASKLPRTQPDGTSVPGEPASPISQ) form a disordered region. Positions 1724–1730 (PRTQPDG) match the Tankyrase-binding domain motif. 2 positions are modified to phosphoserine: Ser-1739 and Ser-1742. Lys-1748 participates in a covalent cross-link: Glycyl lysine isopeptide (Lys-Gly) (interchain with G-Cter in SUMO1); alternate. Lys-1748 is covalently cross-linked (Glycyl lysine isopeptide (Lys-Gly) (interchain with G-Cter in SUMO2); alternate). Residue Ser-1751 is modified to Phosphoserine. Ser-1754 carries the post-translational modification Phosphoserine; by PLK1. Tyr-1756 is modified (phosphotyrosine). Residue Thr-1758 is modified to Phosphothreonine. Positions 1760-1795 (TPARGQAPLETSLDSLGDAFPDSGRKTRSARRRTTQ) are disordered. The tract at residues 1770–1792 (TSLDSLGDAFPDSGRKTRSARRR) is 4.1-binding domain. Position 1771 is a phosphoserine; by PLK1 (Ser-1771). Ser-1774 and Ser-1782 each carry phosphoserine. Thr-1786 bears the Phosphothreonine mark. Lys-1804 is covalently cross-linked (Glycyl lysine isopeptide (Lys-Gly) (interchain with G-Cter in SUMO2)). Disordered stretches follow at residues 1807 to 1883 (LEEP…GRNS) and 1937 to 2094 (EMKT…KVKH). Residues Ser-1812 and Ser-1815 each carry the phosphoserine modification. The span at 1812–1839 (SANSSFYSTQSAPASQANLRATSSTQSL) shows a compositional bias: polar residues. Position 1816 is a phosphoserine; by PLK1 (Ser-1816). Tyr-1818 carries the post-translational modification Phosphotyrosine. Ser-1822 bears the Phosphoserine mark. Phosphoserine; alternate is present on Ser-1826. The O-linked (GlcNAc) serine; alternate glycan is linked to Ser-1826. Phosphoserine is present on residues Ser-1844 and Ser-1869. The interval 1864-1967 (SSARRSQARM…AEGVGITTRQ (104 aa)) is tubulin-binding domain. The segment at 1874–1908 (SSGAPQGRNSFYMGTCQDEPEQLDDWNRIAELQQR) is GPSM2-binding domain. Positions 1937–1948 (EMKTGDPRETLR) are enriched in basic and acidic residues. Phosphoserine is present on Ser-1951. The interval 1963–2042 (ITTRQQRKRV…SILNTPKKLG (80 aa)) is membrane-binding domain 2. The short motif at 1966–1971 (RQQRKR) is the Nuclear localization signal element. 2 positions are modified to phosphoserine: Ser-1973 and Ser-1974. Phosphothreonine is present on Thr-1982. Position 1985 is a phosphoserine (Ser-1985). Thr-1997 carries the post-translational modification Phosphothreonine; by CDK1. A compositionally biased stretch (basic and acidic residues) spans 1997-2006 (TPRDRHEGRK). Ser-2029 carries the post-translational modification Phosphoserine. A Phosphothreonine modification is found at Thr-2037. Residues Ser-2044 and Ser-2059 each carry the phosphoserine modification. The residue at position 2069 (Ser-2069) is a Phosphoserine; by CDK1. Low complexity predominate over residues 2073-2085 (ATTTTGTATVATT). Thr-2085 is subject to Phosphothreonine; by CDK1.

In terms of assembly, homodimer. Also forms multiarm oligomers by association of C-terminal tail domains, oligomers may further assemble to form a hexagonal nuclear lattice-like network. Associates with the dynein-dynactin complex; this association promotes the transport and accumulation of NUMA1 at the mitotic spindle poles that is inhibited by the BRISC complex in a PLK1-dependent manner. Part of a spindle orientation complex at least composed of GNAI1, GPSM2 and NUMA1. Interacts (via C-terminus) with microtubules (MTs); this interaction is direct and promotes both MT bundle formation and stability in a dynein-dynactin complex- and CDK1-independent manner. Interacts with EPB41 and EPB41L2; these interactions are negatively regulated by CDK1 during metaphase and are important for anaphase-specific localization of NUMA1 in symmetrically dividing cells. Interacts (via C-terminus) with GPSM2 (via TPR repeats); this interaction is direct, prevented by competitive binding of INSC, is inhibited in a PLK1-dependent manner, blocks the association of NUMA1 with MTs and inhibits NUMA1-induced MT bundle formation, prevents the association of NUMA1 with SPAG5, induces mitotic spindle pole localization of GPSM2, both metaphase cell cortex localization of NUMA1 and mitotic spindle organization. Does not interact with GPSM2 during anaphase. Interacts (via C-terminus) with the nuclear importin alpha/importin beta receptor; this interaction is inhibited by RanGTP. Interacts (via C-terminus) with KPNB1; this interaction is inhibited by RanGTP and the BRISC complex. Interacts with ABRAXAS2 and the BRISC complex; these interactions regulate mitotic spindle assembly. Interacts (via N-terminal end of the coiled-coil domain) with RAE1; this interaction promotes mitotic spindle formation. Interacts (via C-terminus) with SPAG5 (via C-terminus); this interaction promotes the recruitment of SPAG5 to the MTs at spindle poles in a dynein-dynactin-dependent manner and regulates mitotic spindle organization and proper chromosome alignment during mitosis. Interacts with TNKS; this interaction occurs at the onset of mitosis. Interacts with TNKS2. Interacts with tubulin. Interacts with KHDC3 (via C-terminus). Post-translationally, phosphorylation and dephosphorylation on Thr-2037 regulates the extent of cortical NUMA1 and the dynein-dynactin complex localization during mitotic metaphase and anaphase. In metaphase, phosphorylation on Thr-2037 occurs in a kinase CDK1-dependent manner; this phosphorylation maintains low levels of cortical dynein-dynactin complex at metaphase, and hence proper spindle positioning. In anaphase, dephosphorylated on Thr-2037 by phosphatase PPP2CA; this dephosphorylation stimulates its membrane association and with the dynein-dynactin complex its enrichment at the cell cortex, and hence robust spindle elongation. Probably also phosphorylated on Thr-1997 and Ser-2069 by CDK1; these phosphorylations may regulate its cell cortex recruitment during metaphase and anaphase. Phosphorylated on Ser-1751, Ser-1754, Ser-1771 and Ser-1816 by PLK1; these phosphorylations induce cortical dynein-dynactin complex dissociation from the NUMA1-GPSM2 complex and negatively regulates cortical dynein-dynactin complex localization. ADP-ribosylated by TNKS at the onset of mitosis; ADP-ribosylation is not required for its localization to spindle poles. In terms of processing, O-glycosylated during cytokinesis at sites identical or close to phosphorylation sites, this interferes with the phosphorylation status. Post-translationally, ubiquitinated with 'Lys-63'-linked polyubiquitin chains. Deubiquitination by the BRISC complex is important for the incorporation of NUMA1 into mitotic spindle poles and normal spindle pole function, probably by modulating interactions between NUMA1, dynein-dynactin complex and importin-beta. As to expression, expressed in testis, speen, liver, lung, spinal cord and brain. Expressed in Purkinje neurons (at protein level).

It localises to the nucleus. The protein localises to the nucleoplasm. The protein resides in the nucleus matrix. It is found in the chromosome. Its subcellular location is the cytoplasm. It localises to the cytoskeleton. The protein localises to the microtubule organizing center. The protein resides in the centrosome. It is found in the spindle pole. Its subcellular location is the cell cortex. It localises to the cell membrane. The protein localises to the lateral cell membrane. Functionally, microtubule (MT)-binding protein that plays a role in the formation and maintenance of the spindle poles and the alignement and the segregation of chromosomes during mitotic cell division. Functions to tether the minus ends of MTs at the spindle poles, which is critical for the establishment and maintenance of the spindle poles. Plays a role in the establishment of the mitotic spindle orientation during metaphase and elongation during anaphase in a dynein-dynactin-dependent manner. In metaphase, part of a ternary complex composed of GPSM2 and G(i) alpha proteins, that regulates the recruitment and anchorage of the dynein-dynactin complex in the mitotic cell cortex regions situated above the two spindle poles, and hence regulates the correct oritentation of the mitotic spindle. During anaphase, mediates the recruitment and accumulation of the dynein-dynactin complex at the cell membrane of the polar cortical region through direct association with phosphatidylinositol 4,5-bisphosphate (PI(4,5)P2), and hence participates in the regulation of the spindle elongation and chromosome segregation. Also binds to other polyanionic phosphoinositides, such as phosphatidylinositol 3-phosphate (PIP), lysophosphatidic acid (LPA) and phosphatidylinositol triphosphate (PIP3), in vitro. Also required for proper orientation of the mitotic spindle during asymmetric cell divisions. Plays a role in mitotic MT aster assembly. Involved in anastral spindle assembly. Positively regulates TNKS protein localization to spindle poles in mitosis. Highly abundant component of the nuclear matrix where it may serve a non-mitotic structural role, occupies the majority of the nuclear volume. Required for epidermal differentiation and hair follicle morphogenesis. This Mus musculus (Mouse) protein is Nuclear mitotic apparatus protein 1.